The primary structure comprises 555 residues: Cytochrome P450 78A11 (555 aa).

A helical membrane pass occupies residues 12-32 (VDATWWAYALPALLGADTLCA). Cysteine 495 is a heme binding site.

The protein belongs to the cytochrome P450 family. The cofactor is heme. As to expression, expressed in seedlings, shoot apices and young panicles, but not in mature leaves, calli and roots.

It localises to the membrane. Functionally, involved in the regular timing (plastochron) of lateral organs formation. May regulate the rate of leaf initiation and the duration of vegetative phase. Seems to be redundant to the function of PLASTOCHRON2, but to act in an independent pathway. The sequence is that of Cytochrome P450 78A11 (CYP78A11) from Oryza sativa subsp. japonica (Rice).